The chain runs to 122 residues: uncharacterized protein (122 aa).

This is an uncharacterized protein from Saccharomyces cerevisiae (strain ATCC 204508 / S288c) (Baker's yeast).